The sequence spans 203 residues: Cardiotrophin-1 (203 aa).

This sequence belongs to the IL-6 superfamily. As to expression, highly expressed in heart, skeletal muscle, liver, lung and kidney. Lower levels in testis and brain. No expression in spleen.

The protein resides in the secreted. Functionally, induces cardiac myocyte hypertrophy in vitro. Binds to and activates the ILST/gp130 receptor. The protein is Cardiotrophin-1 (Ctf1) of Mus musculus (Mouse).